Here is a 160-residue protein sequence, read N- to C-terminus: Crossover junction endodeoxyribonuclease RuvC (160 aa).

Active-site residues include Asp-7, Glu-70, and Asp-142. Residues Asp-7, Glu-70, and Asp-142 each contribute to the Mg(2+) site.

The protein belongs to the RuvC family. In terms of assembly, homodimer which binds Holliday junction (HJ) DNA. The HJ becomes 2-fold symmetrical on binding to RuvC with unstacked arms; it has a different conformation from HJ DNA in complex with RuvA. In the full resolvosome a probable DNA-RuvA(4)-RuvB(12)-RuvC(2) complex forms which resolves the HJ. Mg(2+) is required as a cofactor.

It is found in the cytoplasm. It catalyses the reaction Endonucleolytic cleavage at a junction such as a reciprocal single-stranded crossover between two homologous DNA duplexes (Holliday junction).. Functionally, the RuvA-RuvB-RuvC complex processes Holliday junction (HJ) DNA during genetic recombination and DNA repair. Endonuclease that resolves HJ intermediates. Cleaves cruciform DNA by making single-stranded nicks across the HJ at symmetrical positions within the homologous arms, yielding a 5'-phosphate and a 3'-hydroxyl group; requires a central core of homology in the junction. The consensus cleavage sequence is 5'-(A/T)TT(C/G)-3'. Cleavage occurs on the 3'-side of the TT dinucleotide at the point of strand exchange. HJ branch migration catalyzed by RuvA-RuvB allows RuvC to scan DNA until it finds its consensus sequence, where it cleaves and resolves the cruciform DNA. In Ehrlichia ruminantium (strain Welgevonden), this protein is Crossover junction endodeoxyribonuclease RuvC.